Reading from the N-terminus, the 201-residue chain is Adenylyl-sulfate kinase (201 aa).

35-42 (GLSGSGKS) lines the ATP pocket. The active-site Phosphoserine intermediate is S109.

This sequence belongs to the APS kinase family.

It catalyses the reaction adenosine 5'-phosphosulfate + ATP = 3'-phosphoadenylyl sulfate + ADP + H(+). It participates in sulfur metabolism; hydrogen sulfide biosynthesis; sulfite from sulfate: step 2/3. In terms of biological role, catalyzes the synthesis of activated sulfate. This is Adenylyl-sulfate kinase from Shigella boydii serotype 18 (strain CDC 3083-94 / BS512).